The primary structure comprises 234 residues: 2,3,4,5-tetrahydropyridine-2,6-dicarboxylate N-acetyltransferase (234 aa).

This sequence belongs to the transferase hexapeptide repeat family. DapH subfamily.

The enzyme catalyses (S)-2,3,4,5-tetrahydrodipicolinate + acetyl-CoA + H2O = L-2-acetamido-6-oxoheptanedioate + CoA. It participates in amino-acid biosynthesis; L-lysine biosynthesis via DAP pathway; LL-2,6-diaminopimelate from (S)-tetrahydrodipicolinate (acetylase route): step 1/3. Its function is as follows. Catalyzes the transfer of an acetyl group from acetyl-CoA to tetrahydrodipicolinate. The chain is 2,3,4,5-tetrahydropyridine-2,6-dicarboxylate N-acetyltransferase from Ligilactobacillus salivarius (strain UCC118) (Lactobacillus salivarius).